We begin with the raw amino-acid sequence, 807 residues long: Dynein axonemal intermediate chain 4 (807 aa).

Composition is skewed to polar residues over residues 1-11 and 22-31; these read MHSSPTSTRKQ and PRKSISFINP. Disordered stretches follow at residues 1–44 and 300–320; these read MHSS…AASN and YSSK…DSES. Low complexity predominate over residues 32 to 43; it reads SKSSAGKGYAAS. Residues 308–317 show a composition bias toward basic and acidic residues; the sequence is AKDRDPKIQD. WD repeat units follow at residues 493 to 533, 542 to 590, 617 to 657, 661 to 701, 704 to 743, and 749 to 788; these read QSSY…NIPV, KHLG…DCHD, SRQA…QYLE, GHKG…PFLS, PTTY…LDPL, and NPGI…TASD.

Part of the multisubunit axonemal dynein complex formed at least of two heavy chains and a number of intermediate and light chains. Associated with axonemal dynein subunits such as, DNAH2, DNAI3, and DYNLT1. Interacts with DYNLT1. As to expression, highly expressed in tissues containing motile cilia, including the trachea, lung, oviduct, and testis.

It localises to the cytoplasm. Its subcellular location is the cytoskeleton. It is found in the flagellum axoneme. The protein resides in the cilium axoneme. The protein localises to the dynein axonemal particle. In terms of biological role, plays a critical role in the assembly of axonemal dynein complex, thereby playing a role in ciliary motility. The polypeptide is Dynein axonemal intermediate chain 4 (Dnai4) (Mus musculus (Mouse)).